Consider the following 780-residue polypeptide: Chromatin structure-remodeling complex subunit rsc9 (780 aa).

The ARID domain maps to 20-112; that stretch reads TNENDSFLSL…YLISWEIHDH (93 aa). Thr-230 carries the phosphothreonine modification. The RFX-type winged-helix DNA-binding region spans 530–609; it reads SVKWMRCCFE…YVINGIKRRK (80 aa). Ser-696 carries the post-translational modification Phosphoserine.

This sequence belongs to the RSC9 family. Component of the RSC complex composed of at least arp9, arp42, rsc1, rsc4, rsc7, rsc9, rsc58, sfh1, snf21, ssr1, ssr2, ssr3 and ssr4. The complex interacts with histone and histone variant components of centromeric chromatin.

The protein localises to the cytoplasm. It localises to the nucleus. Component of the chromatin structure remodeling complex (RSC), which is involved in transcription regulation and nucleosome positioning. Controls particularly membrane and organelle development genes. The chain is Chromatin structure-remodeling complex subunit rsc9 (rsc9) from Schizosaccharomyces pombe (strain 972 / ATCC 24843) (Fission yeast).